The sequence spans 312 residues: Ribonuclease HIII (312 aa).

In terms of domain architecture, RNase H type-2 spans 95-311; that stretch reads FNCIGSDEAG…REKAQKILKP (217 aa). Asp-101, Glu-102, and Asp-206 together coordinate a divalent metal cation.

This sequence belongs to the RNase HII family. RnhC subfamily. Mn(2+) serves as cofactor. The cofactor is Mg(2+).

The protein resides in the cytoplasm. The catalysed reaction is Endonucleolytic cleavage to 5'-phosphomonoester.. In terms of biological role, endonuclease that specifically degrades the RNA of RNA-DNA hybrids. This chain is Ribonuclease HIII, found in Staphylococcus aureus (strain MW2).